A 96-amino-acid chain; its full sequence is MCLGIPGQVVEVGKTITENALVDVCGVKREVNIALVCEGEPDTMIGKWVLVHVGFAMSIVNEQEAQETLNALMAMGEVEDDVSAFLYGEESTAKRA.

Belongs to the HupF/HypC family.

The chain is Frd operon uncharacterized protein C from Proteus vulgaris.